A 442-amino-acid polypeptide reads, in one-letter code: SPRY domain-containing protein 3 (442 aa).

Residues 17–204 (DLNLHYRFLN…VRLHLNAELG (188 aa)) form the B30.2/SPRY domain. The segment at 371-394 (EGEEEEEEEEEEEDGEEIEPEHEG) is disordered. The span at 372-390 (GEEEEEEEEEEEDGEEIEP) shows a compositional bias: acidic residues.

The sequence is that of SPRY domain-containing protein 3 (SPRYD3) from Pongo abelii (Sumatran orangutan).